We begin with the raw amino-acid sequence, 124 residues long: Vicilin, 14 kDa component (124 aa).

A disordered region spans residues 23-57 (LSKNAKSSSRRSVSSESGPFNLRSEDPLYSNNSGK). N-linked (GlcNAc...) asparagine glycosylation occurs at N53.

Belongs to the 7S seed storage protein family.

The protein resides in the vacuole. Its subcellular location is the aleurone grain. Seed storage protein. The chain is Vicilin, 14 kDa component from Pisum sativum (Garden pea).